The primary structure comprises 446 residues: N-succinylarginine dihydrolase (446 aa).

Substrate contacts are provided by residues 19 to 28, Asn-110, and 137 to 138; these read AGLSFGNVAS and HR. The active site involves Glu-174. Residue Arg-213 coordinates substrate. His-249 is an active-site residue. Residues Asp-251 and Asn-364 each coordinate substrate. Residue Cys-370 is the Nucleophile of the active site.

It belongs to the succinylarginine dihydrolase family. Homodimer.

It catalyses the reaction N(2)-succinyl-L-arginine + 2 H2O + 2 H(+) = N(2)-succinyl-L-ornithine + 2 NH4(+) + CO2. Its pathway is amino-acid degradation; L-arginine degradation via AST pathway; L-glutamate and succinate from L-arginine: step 2/5. Functionally, catalyzes the hydrolysis of N(2)-succinylarginine into N(2)-succinylornithine, ammonia and CO(2). This chain is N-succinylarginine dihydrolase, found in Paraburkholderia xenovorans (strain LB400).